A 221-amino-acid chain; its full sequence is HTH-type transcriptional regulator McbR (221 aa).

The HTH gntR-type domain maps to 10–77; the sequence is VSLTLQVEND…PAQAFTVPEV (68 aa). The H-T-H motif DNA-binding region spans 37–56; the sequence is TKNLAEQLGMSITPVREALL.

Important for biofilm formation. Represses expression of McbA by binding to its promoter region, which prevents colanic acid overproduction and mucoidy. This chain is HTH-type transcriptional regulator McbR (mcbR), found in Escherichia coli (strain K12).